The following is a 189-amino-acid chain: GMP synthase [glutamine-hydrolyzing] subunit A (189 aa).

The 185-residue stretch at 3–187 (RIDVIDNHGQ…LSVCDQQSVA (185 aa)) folds into the Glutamine amidotransferase type-1 domain. Catalysis depends on C73, which acts as the Nucleophile. Active-site residues include H161 and E163.

As to quaternary structure, heterodimer composed of a glutamine amidotransferase subunit (A) and a GMP-binding subunit (B).

The catalysed reaction is XMP + L-glutamine + ATP + H2O = GMP + L-glutamate + AMP + diphosphate + 2 H(+). It participates in purine metabolism; GMP biosynthesis; GMP from XMP (L-Gln route): step 1/1. Functionally, catalyzes the synthesis of GMP from XMP. The sequence is that of GMP synthase [glutamine-hydrolyzing] subunit A from Haloarcula marismortui (strain ATCC 43049 / DSM 3752 / JCM 8966 / VKM B-1809) (Halobacterium marismortui).